The primary structure comprises 407 residues: FK506-binding protein 3 (407 aa).

Disordered regions lie at residues 46–136, 191–223, and 236–297; these read RIEG…DDEG, DEDE…EDEV, and QDDE…PKLV. Composition is skewed to acidic residues over residues 65-88 and 103-136; these read NFDD…EVSA and DGLD…DDEG. The segment covering 236–252 has biased composition (acidic residues); it reads QDDEDDEDDEDEEEEPV. Residues 253-272 show a composition bias toward basic and acidic residues; the sequence is VEPKKILKRAAEEKKQEKAA. The region spanning 321–407 is the PPIase FKBP-type domain; sequence GSKVGVRYVG…TFDVKVVNIK (87 aa).

It belongs to the FKBP-type PPIase family. FKBP3/4 subfamily.

Its subcellular location is the nucleus. It localises to the nucleolus. The enzyme catalyses [protein]-peptidylproline (omega=180) = [protein]-peptidylproline (omega=0). With respect to regulation, inhibited by both FK506 and rapamycin. Its function is as follows. PPIases accelerate the folding of proteins. It catalyzes the cis-trans isomerization of proline imidic peptide bonds in oligopeptides. The chain is FK506-binding protein 3 (FPR3) from Yarrowia lipolytica (strain CLIB 122 / E 150) (Yeast).